A 280-amino-acid polypeptide reads, in one-letter code: Protease HtpX (280 aa).

2 consecutive transmembrane segments (helical) span residues 7 to 26 and 30 to 49; these read TFIL…GLLG and GMLI…YWYS. Histidine 129 serves as a coordination point for Zn(2+). Glutamate 130 is an active-site residue. Histidine 133 lines the Zn(2+) pocket. Transmembrane regions (helical) follow at residues 146 to 166 and 178 to 198; these read ATIA…SMFG and VVGM…QMAI. Residue glutamate 203 participates in Zn(2+) binding.

It belongs to the peptidase M48B family. Zn(2+) is required as a cofactor.

The protein resides in the cell inner membrane. The chain is Protease HtpX from Legionella pneumophila subsp. pneumophila (strain Philadelphia 1 / ATCC 33152 / DSM 7513).